The following is a 54-amino-acid chain: MPGKKARKNAQPSPARAPAELEVECATQLRRFGDKLNFRQKLLNLISKLFCSGT.

A BH3 motif is present at residues 29–37 (LRRFGDKLN). The required for mitochondrial location stretch occupies residues 41 to 50 (KLLNLISKLF).

The protein belongs to the PMAIP1 family. Interacts with MCL1. Interacts with BCL2A1. Interacts with BAX. Interacts with BCL2L10. As to expression, highly expressed in adult T-cell leukemia cell line.

The protein resides in the mitochondrion. Promotes activation of caspases and apoptosis. Promotes mitochondrial membrane changes and efflux of apoptogenic proteins from the mitochondria. Contributes to p53/TP53-dependent apoptosis after radiation exposure. Promotes proteasomal degradation of MCL1. Competes with BAK1 for binding to MCL1 and can displace BAK1 from its binding site on MCL1. Competes with BIM/BCL2L11 for binding to MCL1 and can displace BIM/BCL2L11 from its binding site on MCL1. The chain is Phorbol-12-myristate-13-acetate-induced protein 1 (PMAIP1) from Homo sapiens (Human).